Consider the following 725-residue polypeptide: Manganese-exporting P-type ATPase (725 aa).

The HMA domain occupies 25–92 (GRMRIQIEWV…AISGAAHVAA (68 aa)). The next 6 membrane-spanning stretches (helical) occupy residues 101–119 (HSSDIRNIEVLRMAIGAAA), 142–160 (LVASGVTIFTGYPFLRGAL), 165–179 (TGTDALVSVATIASL), 188–202 (LAVLWLLNIGEYLQD), 335–359 (VGENFSRCFVPTSFVVSAITLAITK), and 365–383 (MTVLLIACPCAVGLATPTA). The active-site 4-aspartylphosphate intermediate is Asp-416. 3 residues coordinate Mg(2+): Asp-416, Thr-418, and Asp-618. 2 helical membrane-spanning segments follow: residues 669–688 (AVEVIRENYGMSIAVNAAGL) and 698–717 (PVLAAVLHNASSVAVVANSS).

The protein belongs to the cation transport ATPase (P-type) (TC 3.A.3) family. Type IB subfamily.

The protein resides in the cell membrane. The catalysed reaction is Mn(2+)(in) + ATP + H2O = Mn(2+)(out) + ADP + phosphate + H(+). Its function is as follows. High affinity, slow turnover Mn(2+) transporting ATPase. This chain is Manganese-exporting P-type ATPase (ctpC), found in Mycobacterium leprae (strain TN).